Here is a 1056-residue protein sequence, read N- to C-terminus: Isoleucine--tRNA ligase (1056 aa).

The span at 1–13 (MCDQGEVSSQNSS) shows a compositional bias: polar residues. Residues 1-26 (MCDQGEVSSQNSSDYKEQRPTPRPNL) are disordered. The short motif at 63–73 (PFANGLPHFGH) is the 'HIGH' region element. Positions 632–636 (KASKS) match the 'KMSKS' region motif. K635 contributes to the ATP binding site.

This sequence belongs to the class-I aminoacyl-tRNA synthetase family. IleS type 2 subfamily. In terms of assembly, monomer. Requires Zn(2+) as cofactor.

It localises to the cytoplasm. The catalysed reaction is tRNA(Ile) + L-isoleucine + ATP = L-isoleucyl-tRNA(Ile) + AMP + diphosphate. Functionally, catalyzes the attachment of isoleucine to tRNA(Ile). As IleRS can inadvertently accommodate and process structurally similar amino acids such as valine, to avoid such errors it has two additional distinct tRNA(Ile)-dependent editing activities. One activity is designated as 'pretransfer' editing and involves the hydrolysis of activated Val-AMP. The other activity is designated 'posttransfer' editing and involves deacylation of mischarged Val-tRNA(Ile). This chain is Isoleucine--tRNA ligase, found in Tropheryma whipplei (strain TW08/27) (Whipple's bacillus).